Consider the following 135-residue polypeptide: Probable transporter PD_1892 (135 aa).

Transmembrane regions (helical) follow at residues 4–24, 45–65, 71–91, and 114–134; these read YWYP…LLLL, AQNI…TVIF, VTVA…GLGT, and IVAT…MGVY.

The protein belongs to the TsuA/YedE (TC 9.B.102) family.

It is found in the cell inner membrane. In Xylella fastidiosa (strain Temecula1 / ATCC 700964), this protein is Probable transporter PD_1892.